Reading from the N-terminus, the 262-residue chain is uncharacterized protein (262 aa).

The next 6 helical transmembrane spans lie at 7–27, 58–78, 114–134, 140–160, 179–199, and 216–236; these read LAVAISFFVFGASVLYSLAHM, DTLGECLVLVVAVMVSWIVFG, FLAFPMSVLMVALGIITVLGG, GGFQGGALIAAAFILSVIAFG, GALGYLLLGVAGMFIGGYYLF, and IITAGIIPYLNIAVGLKVLAG.

It is found in the cell membrane. This is an uncharacterized protein from Methanocaldococcus jannaschii (strain ATCC 43067 / DSM 2661 / JAL-1 / JCM 10045 / NBRC 100440) (Methanococcus jannaschii).